A 291-amino-acid polypeptide reads, in one-letter code: Glycine--tRNA ligase alpha subunit (291 aa).

It belongs to the class-II aminoacyl-tRNA synthetase family. Tetramer of two alpha and two beta subunits.

The protein resides in the cytoplasm. It catalyses the reaction tRNA(Gly) + glycine + ATP = glycyl-tRNA(Gly) + AMP + diphosphate. The sequence is that of Glycine--tRNA ligase alpha subunit from Geobacter metallireducens (strain ATCC 53774 / DSM 7210 / GS-15).